A 276-amino-acid chain; its full sequence is Rhomboid protease GlpG (276 aa).

Transmembrane regions (helical) follow at residues 94-114, 142-162, 169-189, 192-212, 229-249, and 250-270; these read GPVT…MQIL, ALMH…WYLG, LGSG…GYVQ, FSGP…GYVW, LIIF…GMSM, and ANGA…VDSL. The active-site Nucleophile is the Ser201. The active site involves His254.

This sequence belongs to the peptidase S54 family.

It localises to the cell inner membrane. It catalyses the reaction Cleaves type-1 transmembrane domains using a catalytic dyad composed of serine and histidine that are contributed by different transmembrane domains.. Its function is as follows. Rhomboid-type serine protease that catalyzes intramembrane proteolysis. This Escherichia coli O157:H7 protein is Rhomboid protease GlpG.